The sequence spans 375 residues: Phosphoglucan phosphatase DSP4, amyloplastic (375 aa).

An amyloplast-targeting transit peptide spans 1–42; it reads MFCVQNLPRSSALPLQSFKSHQRRPPCSVNTLGVMSNVNLHR. Residues 49–71 form a disordered region; it reads ISGPTSSAETSDANVEEEKSETY. Polar residues predominate over residues 51 to 61; the sequence is GPTSSAETSDA. A Tyrosine-protein phosphatase domain is found at 92–249; that stretch reads NYNFIRPDLI…AADILTGLRK (158 aa). Catalysis depends on Cys-193, which acts as the Phosphocysteine intermediate. 194-199 contributes to the substrate binding site; the sequence is TAGLGR. The polysaccharide binding stretch occupies residues 254 to 330; it reads LTWKNPDCTT…NKDGHVNNFV (77 aa).

Expressed in phloem parenchyma of 16-24 week old seedlings and 2 year old trees (at protein level). Expressed in leaves of 16-24 week old seedlings and 2 year old trees.

The protein resides in the plastid. The protein localises to the amyloplast. It is found in the nucleus. In terms of biological role, starch granule-associated phosphoglucan phosphatase involved in the control of starch accumulation. Acts as a major regulator of the initial steps of starch degradation at the granule surface. Functions during the day by dephosphorylating the night-accumulated phospho-oligosaccharides. Can release phosphate from both the C6 and the C3 positions. The chain is Phosphoglucan phosphatase DSP4, amyloplastic from Castanea sativa (Sweet chestnut).